The primary structure comprises 3767 residues: Transmembrane cell adhesion receptor mua-3 (3767 aa).

The N-terminal stretch at 1–24 is a signal peptide; the sequence is MQAGISIFFLFLHIPIFFVNCSNS. Over 25 to 3417 the chain is Extracellular; that stretch reads TSCVAREEFQ…CQVAPSNASL (3393 aa). Residues 26–63 enclose the LDL-receptor class A 1 domain; sequence SCVAREEFQCKMDDSCISMKKWQDGVDDCYDGSDEVCL. 10 disulfide bridges follow: Cys-27/Cys-41, Cys-35/Cys-54, Cys-62/Cys-76, Cys-69/Cys-89, Cys-97/Cys-110, Cys-104/Cys-123, Cys-131/Cys-144, Cys-138/Cys-157, Cys-165/Cys-179, and Cys-172/Cys-192. LDL-receptor class A domains lie at 96–132, 133–166, and 167–209; these read GCPAHYFVCRDRSACIEPSKYLNGVADCKDKSDEPCA, QNQFQCSDGTKCIPKAQFQDGKEDCDDGSDEECT, and TSQF…ANCT. Residues Asn-201 and Asn-207 are each glycosylated (N-linked (GlcNAc...) asparagine). EGF-like domains follow at residues 225 to 268, 375 to 416, 418 to 466, 468 to 517, 519 to 566, 614 to 663, 665 to 713, 714 to 760, 762 to 810, 816 to 860, 861 to 908, 910 to 961, 963 to 1012, 1029 to 1070, 1071 to 1118, 1120 to 1168, and 1170 to 1219; these read KLKF…DKCI, NRDD…GTCR, LIDE…RKCR, LINE…RNCT, AINE…RKCV, RANP…RKCV, AVDE…RSCK, KADM…RVCR, VVNE…KNCV, DPPE…GRCV, VINE…RICR, RVNE…RRCI, AVNE…RICT, TDDG…GSCR, VYSA…RICK, LINE…RQCT, and SNNE…RVCT. 51 disulfide bridges follow: Cys-229–Cys-243, Cys-235–Cys-252, Cys-254–Cys-267, Cys-381–Cys-392, Cys-386–Cys-402, Cys-404–Cys-415, Cys-422–Cys-435, Cys-429–Cys-444, Cys-446–Cys-465, Cys-472–Cys-486, Cys-480–Cys-495, Cys-497–Cys-516, Cys-523–Cys-536, Cys-530–Cys-545, Cys-547–Cys-565, Cys-618–Cys-632, Cys-626–Cys-642, Cys-644–Cys-662, Cys-669–Cys-682, Cys-676–Cys-691, Cys-693–Cys-712, Cys-718–Cys-729, Cys-723–Cys-738, Cys-740–Cys-759, Cys-766–Cys-779, Cys-773–Cys-788, Cys-790–Cys-809, Cys-820–Cys-836, Cys-828–Cys-845, Cys-847–Cys-859, Cys-865–Cys-879, Cys-873–Cys-888, Cys-890–Cys-907, Cys-914–Cys-930, Cys-924–Cys-939, Cys-941–Cys-960, Cys-967–Cys-981, Cys-975–Cys-990, Cys-992–Cys-1011, Cys-1033–Cys-1046, Cys-1040–Cys-1055, Cys-1057–Cys-1069, Cys-1075–Cys-1087, Cys-1081–Cys-1096, Cys-1098–Cys-1117, Cys-1124–Cys-1137, Cys-1131–Cys-1146, Cys-1148–Cys-1167, Cys-1174–Cys-1188, Cys-1182–Cys-1197, and Cys-1199–Cys-1218. N-linked (GlcNAc...) asparagine glycosylation is present at Asn-383. An N-linked (GlcNAc...) asparagine glycan is attached at Asn-515. The 177-residue stretch at 1230–1406 folds into the VWFA domain; it reads DLVFLIDGSG…DLDTRLRSMI (177 aa). The N-linked (GlcNAc...) asparagine glycan is linked to Asn-1350. EGF-like domains lie at 1421-1466, 1466-1510, 1521-1562, 1563-1608, 1608-1656, 1658-1706, 1708-1755, 1759-1807, 1809-1860, 1862-1911, 1913-1961, 1963-2011, 2014-2062, 2068-2112, 2113-2160, 2162-2208, 2210-2258, 2260-2308, 2310-2358, 2360-2408, 2409-2455, 2456-2504, 2513-2563, 2565-2616, 2618-2666, 2668-2714, 2716-2763, 2763-2811, and 2833-2872; these read SEDV…RVCG, GGDL…GFCV, HDAN…GQCA, YPGS…DICL, LKNE…RVCV, LQNE…MVCK, LVNE…RRCE, TNDK…RLCI, VIPE…RLCK, LQNE…RKCK, LINE…RRCL, RINE…RICR, LVDE…RLCQ, PPPE…GSCS, IINE…RMCK, MVNE…RICK, LTNE…RACR, LVNE…RVCL, FINE…RVCV, LVDE…RVCS, APEV…RVCV, RNNA…RVCE, PRHP…RLCV, TEPV…RICK, LINE…RICS, SVNE…HRCS, MINE…RICR, RLNE…RICI, and REFPCGRDDCIKARGEVCISGEYCGCKPGEGRSASTGKCQ. 66 disulfide bridges follow: Cys-1425-Cys-1441, Cys-1433-Cys-1450, Cys-1452-Cys-1465, Cys-1470-Cys-1484, Cys-1478-Cys-1494, Cys-1496-Cys-1509, Cys-1525-Cys-1538, Cys-1532-Cys-1547, Cys-1549-Cys-1561, Cys-1567-Cys-1583, Cys-1575-Cys-1592, Cys-1594-Cys-1607, Cys-1612-Cys-1625, Cys-1619-Cys-1634, Cys-1636-Cys-1655, Cys-1662-Cys-1675, Cys-1669-Cys-1684, Cys-1686-Cys-1705, Cys-1712-Cys-1726, Cys-1720-Cys-1735, Cys-1737-Cys-1754, Cys-1763-Cys-1776, Cys-1770-Cys-1786, Cys-1788-Cys-1806, Cys-1813-Cys-1829, Cys-1821-Cys-1838, Cys-1840-Cys-1859, Cys-1866-Cys-1880, Cys-1873-Cys-1889, Cys-1891-Cys-1910, Cys-1917-Cys-1930, Cys-1924-Cys-1939, Cys-1941-Cys-1960, Cys-1967-Cys-1980, Cys-1974-Cys-1989, Cys-1991-Cys-2010, Cys-2018-Cys-2031, Cys-2025-Cys-2040, Cys-2042-Cys-2061, Cys-2072-Cys-2088, Cys-2080-Cys-2097, Cys-2099-Cys-2111, Cys-2117-Cys-2131, Cys-2125-Cys-2140, Cys-2142-Cys-2159, Cys-2166-Cys-2180, Cys-2174-Cys-2189, Cys-2191-Cys-2207, Cys-2214-Cys-2228, Cys-2222-Cys-2237, Cys-2239-Cys-2257, Cys-2264-Cys-2278, Cys-2272-Cys-2287, Cys-2289-Cys-2307, Cys-2314-Cys-2327, Cys-2321-Cys-2336, Cys-2338-Cys-2357, Cys-2364-Cys-2377, Cys-2371-Cys-2386, Cys-2388-Cys-2407, Cys-2413-Cys-2425, Cys-2419-Cys-2435, Cys-2437-Cys-2454, Cys-2460-Cys-2474, Cys-2468-Cys-2483, and Cys-2485-Cys-2503. Residues 2492–2521 form a disordered region; sequence RSPDSSQRGRVCEPPPPPSPPPRHPCQDPE. A compositionally biased stretch (pro residues) spans 2504–2515; it reads EPPPPPSPPPRH. Disulfide bonds link Cys-2517–Cys-2531, Cys-2525–Cys-2541, Cys-2543–Cys-2562, Cys-2569–Cys-2583, Cys-2577–Cys-2594, Cys-2596–Cys-2615, Cys-2622–Cys-2636, Cys-2630–Cys-2645, Cys-2647–Cys-2665, Cys-2672–Cys-2686, Cys-2680–Cys-2695, Cys-2697–Cys-2713, Cys-2720–Cys-2734, Cys-2728–Cys-2743, Cys-2745–Cys-2762, Cys-2767–Cys-2781, Cys-2775–Cys-2790, Cys-2792–Cys-2810, Cys-2837–Cys-2850, Cys-2842–Cys-2856, and Cys-2858–Cys-2871. Residues 2873–2999 enclose the SEA 1 domain; it reads EVQETPFELR…GSLRVASDTD (127 aa). Asn-2944 carries N-linked (GlcNAc...) asparagine glycosylation. In terms of domain architecture, EGF-like 47 spans 3009–3048; the sequence is EWGNCGGMSCKEHLKEVCIAGHICGCPDGMKRRDANSECR. 3 disulfide bridges follow: Cys-3013/Cys-3026, Cys-3018/Cys-3032, and Cys-3034/Cys-3047. The SEA 2 domain maps to 3049-3174; that stretch reads VVESWNVPLW…SELYLNPTQP (126 aa). N-linked (GlcNAc...) asparagine glycosylation is found at Asn-3120 and Asn-3130. EGF-like domains lie at 3176–3220, 3224–3272, and 3272–3324; these read PFNP…KKCL, GFNE…SLCV, and VLDY…TLCM. Intrachain disulfides connect Cys-3180–Cys-3191, Cys-3185–Cys-3201, Cys-3203–Cys-3219, Cys-3228–Cys-3242, Cys-3236–Cys-3251, Cys-3253–Cys-3271, Cys-3276–Cys-3288, Cys-3282–Cys-3297, Cys-3299–Cys-3323, Cys-3332–Cys-3345, Cys-3339–Cys-3354, Cys-3356–Cys-3372, Cys-3377–Cys-3386, Cys-3380–Cys-3397, and Cys-3399–Cys-3408. Residue Asn-3285 is glycosylated (N-linked (GlcNAc...) asparagine). Positions 3328–3373 constitute an EGF-like 51; calcium-binding domain; the sequence is DVDECALGLNNCSGVAHCIDRAVGYTCKCPDGYIDGNPDEPGRVCG. Asn-3337 is a glycosylation site (N-linked (GlcNAc...) asparagine; atypical). A glycan (N-linked (GlcNAc...) asparagine) is linked at Asn-3338. In terms of domain architecture, EGF-like 52 spans 3373-3409; sequence GALLCDLCNAHGDCVHNTATNNITCVCTDGWTGPQCQ. Asn-3394 is a glycosylation site (N-linked (GlcNAc...) asparagine). Residue Asn-3414 is glycosylated (N-linked (GlcNAc...) asparagine). The chain crosses the membrane as a helical span at residues 3418–3438; it reads VLLILLALLFLLLTLCCLLYF. Over 3439-3767 the chain is Cytoplasmic; that stretch reads CTKCHCFKGR…SQTSTHVTKK (329 aa). A disordered region spans residues 3582-3729; that stretch reads TTTTDEQGNT…EEDVEHSVGD (148 aa). Polar residues predominate over residues 3588-3597; it reads QGNTIVTTTE. Over residues 3630 to 3665 the composition is skewed to low complexity; it reads QSQSQQQQSMSQGMSQSMSQHATSAGYSSSGMESSA. Over residues 3675 to 3684 the composition is skewed to basic and acidic residues; the sequence is HTGERERGGS. The segment covering 3690 to 3702 has biased composition (low complexity); that stretch reads IGRARGMAAASSG.

As to expression, expressed in the hypodermis at the sites of muscle contact, in striated muscles including body wall muscles, the anal sphincter muscles and the junctions between the anal sphincter muscle and rectal cuticle. Also expressed in non-muscle cells including the excretory duct cell and pore cells.

It is found in the cell membrane. It localises to the cell junction. The protein localises to the hemidesmosome. In terms of biological role, involved in cell adhesion and required for organ positioning and attachment. At the hypodermal surface, required for attachment of the hypdermermis to the basal cuticle in postembryonic development, possibly through intermediate filaments of the cytoskeleton. The chain is Transmembrane cell adhesion receptor mua-3 from Caenorhabditis elegans.